Reading from the N-terminus, the 122-residue chain is Large ribosomal subunit protein uL14 (122 aa).

It belongs to the universal ribosomal protein uL14 family. As to quaternary structure, part of the 50S ribosomal subunit. Forms a cluster with proteins L3 and L19. In the 70S ribosome, L14 and L19 interact and together make contacts with the 16S rRNA in bridges B5 and B8.

Its function is as follows. Binds to 23S rRNA. Forms part of two intersubunit bridges in the 70S ribosome. This is Large ribosomal subunit protein uL14 from Shewanella denitrificans (strain OS217 / ATCC BAA-1090 / DSM 15013).